The chain runs to 13041 residues: Nonribosomal peptide synthetase kk1B (13041 aa).

Residues 267–663 form an adenylation 1 region; that stretch reads ANRVVDTPQK…GRRDSQIKIR (397 aa). The region spanning 788-864 is the Carrier 1 domain; that stretch reads ASLMTEGITL…GLINVMQQSS (77 aa). S825 bears the O-(pantetheine 4'-phosphoryl)serine mark. The condensation 1 stretch occupies residues 882 to 1313; it reads SFAQGRLWFL…TPIAHLQLTD (432 aa). The tract at residues 1341-1736 is adenylation 2; sequence FQKQVAACPN…GRMDFQIKIR (396 aa). The region spanning 1865–1939 is the Carrier 2 domain; it reads AARNEIEAVL…NLAATIKRGS (75 aa). S1899 is subject to O-(pantetheine 4'-phosphoryl)serine. The condensation 2 stretch occupies residues 1957-2383; sequence SFAQGRLWFL…DQPQTPLALL (427 aa). The interval 2418-2812 is adenylation 3; that stretch reads QVAASPNATA…GRMDQQIKIR (395 aa). The methyltransferase (M) domain 1 stretch occupies residues 2891-3023; the sequence is VGNDFMGWTS…EYLSKVLYAL (133 aa). The region spanning 3353-3427 is the Carrier 3 domain; that stretch reads GARNETEAVL…DLAASIRRGS (75 aa). At S3387 the chain carries O-(pantetheine 4'-phosphoryl)serine. The interval 3445–3869 is condensation 3; it reads SFAQGRLWFL…DQPQIPIAVL (425 aa). The tract at residues 3901–4300 is adenylation 4; it reads FRAQVVACPD…GRMDQQVKIR (400 aa). A Carrier 4 domain is found at 4412-4486; that stretch reads PPRNEIETIL…NLAAAVQRGS (75 aa). S4446 is modified (O-(pantetheine 4'-phosphoryl)serine). The condensation 4 stretch occupies residues 4504 to 4935; it reads SFAQGRLWFL…TPIAALSLTD (432 aa). Residues 4963–5362 are adenylation 5; it reads FREQVATYPD…GRMDRQLKIR (400 aa). A methyltransferase (M) domain 2 region spans residues 5430–5567; that stretch reads TYAELDTLVK…VAQYFPTPEY (138 aa). Residues 5897–5971 form the Carrier 5 domain; that stretch reads QPRNEVEAVL…DLAAAIQRGS (75 aa). S5931 is modified (O-(pantetheine 4'-phosphoryl)serine). The condensation 5 stretch occupies residues 5989-6416; the sequence is SYAQGRLWFL…DQPQTPLALL (428 aa). An adenylation 6 region spans residues 6451-6845; it reads QVAASPNATA…GRMDQQIKIR (395 aa). Residues 6924–7056 are methyltransferase (M) domain 3; the sequence is VGNDFMGWTS…EYLSKVLYAL (133 aa). One can recognise a Carrier 6 domain in the interval 7386-7460; that stretch reads GARNEIEAAL…DLAGAVQRGS (75 aa). S7420 carries the O-(pantetheine 4'-phosphoryl)serine modification. A condensation 6 region spans residues 7478 to 7901; it reads SFAQGRLWFL…GLETPRLPIS (424 aa). The adenylation 7 stretch occupies residues 7934-8335; that stretch reads FRTQVAASPD…GRMDRQLKIR (402 aa). The tract at residues 8404 to 8540 is methyltransferase (M) domain 4; it reads YAEIEEIDSS…AQYFPSPEYL (137 aa). The 75-residue stretch at 8871 to 8945 folds into the Carrier 7 domain; the sequence is GPRNEIEALL…DLAASIQRGS (75 aa). S8905 is modified (O-(pantetheine 4'-phosphoryl)serine). The condensation 7 stretch occupies residues 8963 to 9392; sequence SFAQGRLWFL…PKTPIAVLPL (430 aa). The segment at 9422 to 9822 is adenylation 8; the sequence is FRQQVAARPD…SRMDQQVKIR (401 aa). Positions 9943–10017 constitute a Carrier 8 domain; the sequence is PPTNDMERIL…DLASTIKQDS (75 aa). The residue at position 9977 (S9977) is an O-(pantetheine 4'-phosphoryl)serine. The tract at residues 10035-10462 is condensation 8; the sequence is SFAQGRLWFL…ETPQTPLAVL (428 aa). The tract at residues 10494–10892 is adenylation 9; it reads FRAQVAACPD…GRMDQQIKIR (399 aa). The tract at residues 10959–11105 is methyltransferase (M) domain 5; sequence IYAEIEEIDS…EYLADVVGAL (147 aa). Residues 11428-11502 form the Carrier 9 domain; that stretch reads SARNEVEAVL…DLAASIERNS (75 aa). O-(pantetheine 4'-phosphoryl)serine is present on S11462. Residues 11520-11945 form a condensation 9 region; that stretch reads SFAQGRLWFL…EQPQTPIAVL (426 aa). The interval 11977–12377 is adenylation 10; it reads FRDQVAANPR…GRMDQQIKIR (401 aa). The 75-residue stretch at 12495–12569 folds into the Carrier 10 domain; that stretch reads VPRNELEASL…DLALKVSSYI (75 aa). Position 12529 is an O-(pantetheine 4'-phosphoryl)serine (S12529). The segment at 12647–13032 is condensation 10; sequence FPANADCDKI…RMHEEFCDII (386 aa).

The protein belongs to the NRP synthetase family.

The protein operates within secondary metabolite biosynthesis. Nonribosomal peptide synthetase; part of the gene cluster that mediates the biosynthesis of KK-1, a novel cyclic depsipeptide with 10 residues which is a promising active compound with high activity against many plant pathogens, especially Botrytis cinerea. The nonribosomal peptide synthetase (NRPS) kk1B catalyzes the elongation and cyclization of the decapeptide chain composed of 1 D-lactic acid residue (D-Lac), 1 pipecolic acid residue (Pip), 1 aspartic acid residue (Asp), 1 isoleucine residue (Ile), 1 glycine residue (Gly), 1 tyrosine residue (Tyr) and 4 valine residues (Val). The Asp, Ile and 3 Val residues are N-methylated by the 5 methyltransferase domains from the NRPS (found in modules 3, 5, 6, 7 and 9), whereas the Tyr residue is O-methylated by the cluster encoded O-methyltransferase kk1A. Cyclization with the hydroxy group of the D-lactic acid as a nucleophile is presumed to occur in the final module of NRPS, resulting in the formation of the depsipeptide ester bond through macrocyclization by the C-terminal C domain. The thioesterase kk1J is likely to be involved in the corrective mechanism of peptide chain synthesis. The D-lactate dehydrogenase kk1H is involved in the synthesis of D-lactic acid from pyruvic acid, which is recognized by the A domain of the first kk1B module. The pyrroline-5-carboxylate reductase kk1I is involved in the synthesis of the L-pipecolic acid residue of KK-1 from delta-1-pyrroline-5-carboxylate (P5C), a metabolic intermediate of lysine. It is still unclear how kk1C and kk1D are involved in the production of KK-1. The polypeptide is Nonribosomal peptide synthetase kk1B (Curvularia clavata).